The sequence spans 142 residues: Hemoglobin subunit beta-2 (142 aa).

In terms of domain architecture, Globin spans 2 to 142; that stretch reads SLTDEEKHLI…VTEALSCQYH (141 aa). Positions 59 and 88 each coordinate heme b.

Belongs to the globin family. In terms of assembly, heterotetramer of two alpha chains and two beta chains. Red blood cells.

Involved in oxygen transport from the lung to the various peripheral tissues. This chain is Hemoglobin subunit beta-2 (HBB2), found in Torpedo marmorata (Marbled electric ray).